The following is a 341-amino-acid chain: HTH-type transcriptional repressor PurR (341 aa).

Positions 2–56 (ATIKDVAKRAGVSTTTVSHVINKTRFVADETREAVWVAIKELHYSPSAVARSLKV) constitute an HTH lacI-type domain. A DNA-binding region (H-T-H motif) is located at residues 4 to 23 (IKDVAKRAGVSTTTVSHVIN). A DNA-binding region spans residues 48 to 56 (SAVARSLKV). Residues Tyr-73, Arg-190, Thr-192, Phe-221, and Asp-275 each coordinate hypoxanthine.

In terms of assembly, homodimer.

Its pathway is purine metabolism; purine nucleotide biosynthesis [regulation]. Is the main repressor of the genes involved in the de novo synthesis of purine nucleotides, regulating purB, purC, purEK, purF, purHD, purL, purMN and guaBA expression. PurR is allosterically activated to bind its cognate DNA by binding the purine corepressors, hypoxanthine or guanine, thereby effecting transcription repression. This is HTH-type transcriptional repressor PurR from Erwinia tasmaniensis (strain DSM 17950 / CFBP 7177 / CIP 109463 / NCPPB 4357 / Et1/99).